The primary structure comprises 510 residues: Cobyric acid synthase (510 aa).

The GATase cobBQ-type domain maps to 262 to 460 (EIKVGIIKLP…IHGIFENDEW (199 aa)). Residue Cys343 is the Nucleophile of the active site. Residue His452 is part of the active site.

This sequence belongs to the CobB/CobQ family. CobQ subfamily.

It participates in cofactor biosynthesis; adenosylcobalamin biosynthesis. Functionally, catalyzes amidations at positions B, D, E, and G on adenosylcobyrinic A,C-diamide. NH(2) groups are provided by glutamine, and one molecule of ATP is hydrogenolyzed for each amidation. The sequence is that of Cobyric acid synthase from Prochlorococcus marinus (strain MIT 9515).